A 276-amino-acid chain; its full sequence is Acyl-[acyl-carrier-protein]--UDP-N-acetylglucosamine O-acyltransferase (276 aa).

This sequence belongs to the transferase hexapeptide repeat family. LpxA subfamily. In terms of assembly, homotrimer.

It is found in the cytoplasm. The enzyme catalyses a (3R)-hydroxyacyl-[ACP] + UDP-N-acetyl-alpha-D-glucosamine = a UDP-3-O-[(3R)-3-hydroxyacyl]-N-acetyl-alpha-D-glucosamine + holo-[ACP]. Its pathway is glycolipid biosynthesis; lipid IV(A) biosynthesis; lipid IV(A) from (3R)-3-hydroxytetradecanoyl-[acyl-carrier-protein] and UDP-N-acetyl-alpha-D-glucosamine: step 1/6. Functionally, involved in the biosynthesis of lipid A, a phosphorylated glycolipid that anchors the lipopolysaccharide to the outer membrane of the cell. The protein is Acyl-[acyl-carrier-protein]--UDP-N-acetylglucosamine O-acyltransferase of Synechocystis sp. (strain ATCC 27184 / PCC 6803 / Kazusa).